A 158-amino-acid polypeptide reads, in one-letter code: Transcription elongation factor GreA (158 aa).

Residues 2-70 (ENQKQYPMTQ…IEQDIQRIEH (69 aa)) are a coiled coil.

It belongs to the GreA/GreB family.

In terms of biological role, necessary for efficient RNA polymerase transcription elongation past template-encoded arresting sites. The arresting sites in DNA have the property of trapping a certain fraction of elongating RNA polymerases that pass through, resulting in locked ternary complexes. Cleavage of the nascent transcript by cleavage factors such as GreA or GreB allows the resumption of elongation from the new 3'terminus. GreA releases sequences of 2 to 3 nucleotides. This chain is Transcription elongation factor GreA, found in Staphylococcus epidermidis (strain ATCC 35984 / DSM 28319 / BCRC 17069 / CCUG 31568 / BM 3577 / RP62A).